The following is a 441-amino-acid chain: Enolase (441 aa).

Residue Gln163 coordinates (2R)-2-phosphoglycerate. Glu205 serves as the catalytic Proton donor. Asp242, Glu288, and Asp315 together coordinate Mg(2+). Residues Lys340, Arg369, Ser370, and Lys391 each contribute to the (2R)-2-phosphoglycerate site. Lys340 functions as the Proton acceptor in the catalytic mechanism.

Belongs to the enolase family. It depends on Mg(2+) as a cofactor.

The protein localises to the cytoplasm. The protein resides in the secreted. It is found in the cell surface. The catalysed reaction is (2R)-2-phosphoglycerate = phosphoenolpyruvate + H2O. It functions in the pathway carbohydrate degradation; glycolysis; pyruvate from D-glyceraldehyde 3-phosphate: step 4/5. Its function is as follows. Catalyzes the reversible conversion of 2-phosphoglycerate (2-PG) into phosphoenolpyruvate (PEP). It is essential for the degradation of carbohydrates via glycolysis. The protein is Enolase of Ligilactobacillus salivarius (strain UCC118) (Lactobacillus salivarius).